A 199-amino-acid polypeptide reads, in one-letter code: Recombination protein RecR (199 aa).

The C4-type zinc-finger motif lies at 57–72 (CQSCRTFTEQSLCPIC). In terms of domain architecture, Toprim spans 81 to 176 (GVICVVETPA…IISRIAHGVP (96 aa)).

This sequence belongs to the RecR family.

May play a role in DNA repair. It seems to be involved in an RecBC-independent recombinational process of DNA repair. It may act with RecF and RecO. This chain is Recombination protein RecR, found in Shewanella denitrificans (strain OS217 / ATCC BAA-1090 / DSM 15013).